The sequence spans 217 residues: Magnetosome protein MamA (217 aa).

6 TPR repeats span residues 12 to 44, 46 to 79, 80 to 113, 114 to 147, 148 to 181, and 182 to 215; these read VTLYAHYGLSVAKKLGMNMVDAFRAAFSVNDDI, QVYYRDKGISHAKAGRYSQAVMLLEQVYDADAFD, VDVALHLGIAYVKTGAVDRGTELLERSLADAPDN, VKVATVLGLTYVQVQKYDLAVPLLIKVAEANPIN, FNVRFRLGVALDNLGRFDEAIDSFKIALGLRPNE, and GKVHRAIAFSYEQMGRHEEALPHFKKANELDEGA. Residues 41 to 112 form an N-terminal domain (NTD) region; the sequence is NDDIRQVYYR…LERSLADAPD (72 aa). Residues 113–217 are C-terminal domain (CTD); that stretch reads NVKVATVLGL…ANELDEGASV (105 aa).

The protein belongs to the magnetosome MamA family. As to quaternary structure, oligomerizes into high molecular weight complexes (at least 560 kDa). Forms round, 20 nm diameter complexes with a central cavity. Interacts with full-length Mms6. Probably binds MamC.

It localises to the magnetosome membrane. Its function is as follows. Probably forms a large homooligomer on which other magnetosome subunits assemble. Required for formation of functional magnetosomes from pre-existing vesicles, it has a dynamic location in the cell. This Paramagnetospirillum magneticum (strain ATCC 700264 / AMB-1) (Magnetospirillum magneticum) protein is Magnetosome protein MamA.